The following is a 37-amino-acid chain: Large ribosomal subunit protein bL36 (37 aa).

The protein belongs to the bacterial ribosomal protein bL36 family.

The protein is Large ribosomal subunit protein bL36 of Maridesulfovibrio salexigens (strain ATCC 14822 / DSM 2638 / NCIMB 8403 / VKM B-1763) (Desulfovibrio salexigens).